Consider the following 373-residue polypeptide: MGIKGLNALINEHSPKAFRNGEMKTFFGRKVAIDASMCLYQFLIAVRQQDGQQLANEEGETTSHLMGFFYRTIRMVGYGIKPCYVFDGKPPVLKGGELEKRLKRREEAEKQRLDMKETGTLADIAKFERRTVRVTREQNDQAKKLLELMGIPYVDAPCEAEAQCAELAKGGKVYAAASEDMDTLCYETPYLLRHMTTAEARKLPVTEIDYAKVMEGLEMELPQFIDLCILLGCDYCETIKGVGPVTAFKLIKEHGSIEKVVEAIENNPKSKQKIPENWPYNEARELFLHPEVIPASECELEWKEPDEEALVDYMVRQHGFSEQRIRDGASKLRKSLKTGTQGRLDKFFVVKKRPAEEKKGKNTKEEKPKKKRK.

Residues 1 to 105 (MGIKGLNALI…GELEKRLKRR (105 aa)) form an N-domain region. Aspartate 34 provides a ligand contact to Mg(2+). Residues arginine 47 and arginine 71 each coordinate DNA. Mg(2+) contacts are provided by aspartate 87, glutamate 159, glutamate 161, aspartate 180, and aspartate 182. Positions 123 to 254 (DIAKFERRTV…VTAFKLIKEH (132 aa)) are I-domain. Glutamate 159 is a DNA binding site. DNA contacts are provided by glycine 232 and aspartate 234. Aspartate 234 provides a ligand contact to Mg(2+). An interaction with PCNA region spans residues 340 to 348 (TQGRLDKFF). The segment at 347-373 (FFVVKKRPAEEKKGKNTKEEKPKKKRK) is disordered.

Belongs to the XPG/RAD2 endonuclease family. FEN1 subfamily. In terms of assembly, interacts with PCNA. Three molecules of FEN1 bind to one PCNA trimer with each molecule binding to one PCNA monomer. PCNA stimulates the nuclease activity without altering cleavage specificity. The cofactor is Mg(2+). Phosphorylated. Phosphorylation upon DNA damage induces relocalization to the nuclear plasma.

Its subcellular location is the nucleus. It localises to the nucleolus. The protein resides in the nucleoplasm. The protein localises to the mitochondrion. In terms of biological role, structure-specific nuclease with 5'-flap endonuclease and 5'-3' exonuclease activities involved in DNA replication and repair. During DNA replication, cleaves the 5'-overhanging flap structure that is generated by displacement synthesis when DNA polymerase encounters the 5'-end of a downstream Okazaki fragment. It enters the flap from the 5'-end and then tracks to cleave the flap base, leaving a nick for ligation. Also involved in the long patch base excision repair (LP-BER) pathway, by cleaving within the apurinic/apyrimidinic (AP) site-terminated flap. Acts as a genome stabilization factor that prevents flaps from equilibrating into structures that lead to duplications and deletions. Also possesses 5'-3' exonuclease activity on nicked or gapped double-stranded DNA, and exhibits RNase H activity. Also involved in replication and repair of rDNA and in repairing mitochondrial DNA. This chain is Flap endonuclease 1, found in Komagataella phaffii (strain GS115 / ATCC 20864) (Yeast).